The following is a 512-amino-acid chain: Serine--tRNA ligase, cytoplasmic (512 aa).

Position 1 is an N-acetylmethionine (M1). Residues 9–61 are interaction with tRNA; that stretch reads RVDKGGDPALIRETQEKRFKDPGLVDQLVKADSEWRRCRFRADNLNKLKNLCS. S241 bears the Phosphoserine mark. Residues T271 and R302 each contribute to the L-serine site. Residues 302-304 and 318-321 each bind ATP; these read RQE and VHQF. At K323 the chain carries N6-acetyllysine. E325 contributes to the L-serine binding site. 391–394 contacts ATP; sequence ELVS. N427 contacts L-serine. Positions 472–512 are disordered; sequence KPAPIDQEPSKKQKKQHEGSKKKAKEVTLENQLQNMEVTEA. Basic and acidic residues predominate over residues 479–499; it reads EPSKKQKKQHEGSKKKAKEVT. Residues 482-494 carry the Nuclear localization signal motif; that stretch reads KKQKKQHEGSKKK. The span at 500-512 shows a compositional bias: polar residues; that stretch reads LENQLQNMEVTEA.

It belongs to the class-II aminoacyl-tRNA synthetase family. Type-1 seryl-tRNA synthetase subfamily. Homodimer. The tRNA molecule may bind across the dimer. Interacts with SIRT2. Interacts with METTL6; interaction is required for the tRNA N(3)-methylcytidine methyltransferase activity of METTL6.

The protein resides in the cytoplasm. The protein localises to the nucleus. It carries out the reaction tRNA(Ser) + L-serine + ATP = L-seryl-tRNA(Ser) + AMP + diphosphate + H(+). It catalyses the reaction tRNA(Sec) + L-serine + ATP = L-seryl-tRNA(Sec) + AMP + diphosphate + H(+). Its pathway is aminoacyl-tRNA biosynthesis; selenocysteinyl-tRNA(Sec) biosynthesis; L-seryl-tRNA(Sec) from L-serine and tRNA(Sec): step 1/1. Functionally, catalyzes the attachment of serine to tRNA(Ser) in a two-step reaction: serine is first activated by ATP to form Ser-AMP and then transferred to the acceptor end of tRNA(Ser). Is probably also able to aminoacylate tRNA(Sec) with serine, to form the misacylated tRNA L-seryl-tRNA(Sec), which will be further converted into selenocysteinyl-tRNA(Sec). In the nucleus, binds to the VEGFA core promoter and prevents MYC binding and transcriptional activation by MYC. Recruits SIRT2 to the VEGFA promoter, promoting deacetylation of histone H4 at 'Lys-16' (H4K16). Thereby, inhibits the production of VEGFA and sprouting angiogenesis mediated by VEGFA. The chain is Serine--tRNA ligase, cytoplasmic (Sars1) from Rattus norvegicus (Rat).